The following is an 817-amino-acid chain: Probable beta-glucosidase G (817 aa).

A signal peptide spans 1-20 (MANIAHLIVSGLLAATVAHG). Residues asparagine 40, asparagine 58, asparagine 229, and asparagine 276 are each glycosylated (N-linked (GlcNAc...) asparagine). Residue aspartate 304 is part of the active site. 10 N-linked (GlcNAc...) asparagine glycosylation sites follow: asparagine 343, asparagine 350, asparagine 402, asparagine 507, asparagine 563, asparagine 584, asparagine 623, asparagine 662, asparagine 679, and asparagine 715.

It belongs to the glycosyl hydrolase 3 family.

Its subcellular location is the secreted. The enzyme catalyses Hydrolysis of terminal, non-reducing beta-D-glucosyl residues with release of beta-D-glucose.. Its pathway is glycan metabolism; cellulose degradation. Beta-glucosidases are one of a number of cellulolytic enzymes involved in the degradation of cellulosic biomass. Catalyzes the last step releasing glucose from the inhibitory cellobiose. The protein is Probable beta-glucosidase G (bglG) of Aspergillus terreus (strain NIH 2624 / FGSC A1156).